Here is a 99-residue protein sequence, read N- to C-terminus: Prostate and testis expressed protein 14 (99 aa).

An N-terminal signal peptide occupies residues 1–21 (MEKYLLLLLLGIFLRVGFLQA). The region spanning 22-99 (LTCVSCGRLN…CDHQNLCNKP (78 aa)) is the UPAR/Ly6 domain. Disulfide bonds link Cys24/Cys51, Cys27/Cys36, Cys43/Cys69, Cys73/Cys89, and Cys90/Cys96. Residue Asn31 is glycosylated (N-linked (GlcNAc...) asparagine). N-linked (GlcNAc...) asparagine glycosylation is present at Asn75.

This sequence belongs to the PATE family. As to quaternary structure, monomer. Glycosylated. In terms of tissue distribution, predominantly expressed in the seminal vesicles. Expressed in prostate, and to a lesser extent in the cauda epididymis.

It is found in the secreted. This Mus musculus (Mouse) protein is Prostate and testis expressed protein 14.